A 213-amino-acid polypeptide reads, in one-letter code: Ergothioneine transport ATP-binding protein EgtV (213 aa).

The ABC transporter domain occupies 5 to 212 (VTIENVSFNY…ATKTLEIKAL (208 aa)). 37–44 (GESGSGKS) serves as a coordination point for ATP.

This sequence belongs to the ABC transporter superfamily. In terms of assembly, the complex is composed of two ATP-binding proteins (EgtV) and two transmembrane proteins (EgtU).

It localises to the cell inner membrane. The catalysed reaction is ergothioneine(out) + ATP + H2O = ergothioneine(in) + ADP + phosphate + H(+). Functionally, part of the ABC transporter complex EgtUV involved in the uptake of ergothioneine (EGT), a natural low-molecular weight (LMW) thiol antioxidant which protects H.pylori against bleach stress. Responsible for energy coupling to the transport system. This Helicobacter pylori (strain G27) protein is Ergothioneine transport ATP-binding protein EgtV.